Here is a 342-residue protein sequence, read N- to C-terminus: Cystein proteinase inhibitor protein salarin (342 aa).

The signal sequence occupies residues 1 to 19; the sequence is MKSLVLLLLVAVTVSSVVS. Asparagine 153 is a glycosylation site (N-linked (GlcNAc) asparagine). O-linked (GlcNAc) threonine glycosylation is present at threonine 184.

In terms of processing, N-glycosylated, with sialylated biantennary complex-type glycans. Post-translationally, O-glycosylated, with sialylated oligosaccharides.

The protein resides in the cytoplasm. It localises to the vacuole. Inhibits papain and ficin (cysteine proteinases) but not trypsin (a serine proteinase). The protein is Cystein proteinase inhibitor protein salarin (salarin) of Salvelinus alpinus (Arctic char).